The following is a 139-amino-acid chain: Large ribosomal subunit protein uL16 (139 aa).

It belongs to the universal ribosomal protein uL16 family. In terms of assembly, part of the 50S ribosomal subunit.

Binds 23S rRNA and is also seen to make contacts with the A and possibly P site tRNAs. This chain is Large ribosomal subunit protein uL16, found in Microcystis aeruginosa (strain NIES-843 / IAM M-2473).